The chain runs to 38 residues: Putative defensin-like protein 105 (38 aa).

3 disulfide bridges follow: cysteine 5–cysteine 27, cysteine 13–cysteine 33, and cysteine 17–cysteine 34.

Belongs to the DEFL family.

The sequence is that of Putative defensin-like protein 105 from Arabidopsis thaliana (Mouse-ear cress).